The chain runs to 112 residues: Putative pterin-4-alpha-carbinolamine dehydratase (112 aa).

Belongs to the pterin-4-alpha-carbinolamine dehydratase family.

It carries out the reaction (4aS,6R)-4a-hydroxy-L-erythro-5,6,7,8-tetrahydrobiopterin = (6R)-L-erythro-6,7-dihydrobiopterin + H2O. This is Putative pterin-4-alpha-carbinolamine dehydratase from Hahella chejuensis (strain KCTC 2396).